A 413-amino-acid polypeptide reads, in one-letter code: MQKRVVVLLLDSFGIGASEDAKDFGDLGANTLGNIAKACFNNLADSNDRNGALKLPNLESLGLGLSALKATNELPLGFDSHPNLIGAYAYAQELSSAKDTISGHWEMMGAPILFEWGYFKDKNNSFPKEILDEIMHKTKIKGYLGNCHASGTEIIKDLGEKHLETLYPIFYTSADSVFQIAVHEEKFGLDKLYALCEEVFEILEPLKIARVIARSFIGTNKDNFKRTSNRKDYAIKPHKKLLFETFIEEKQGEVISIGKIADIYAHVGITQKFKAGSLMELCDVTLEQVKNAQNNSLIFTNFVHFDSDYGHRRDVIGYANALEYFDAYLKEILESLRENDLLILCADHGCDPSFKGTDHTREYIPVLMYHKDLQPTFLGRSETFADIGQSIAHFLGLSPLDYGKNLLNFKGQP.

Mn(2+) contacts are provided by aspartate 11, aspartate 306, histidine 311, aspartate 347, histidine 348, and histidine 359.

This sequence belongs to the phosphopentomutase family. Mn(2+) is required as a cofactor.

The protein localises to the cytoplasm. It catalyses the reaction 2-deoxy-alpha-D-ribose 1-phosphate = 2-deoxy-D-ribose 5-phosphate. The enzyme catalyses alpha-D-ribose 1-phosphate = D-ribose 5-phosphate. Its pathway is carbohydrate degradation; 2-deoxy-D-ribose 1-phosphate degradation; D-glyceraldehyde 3-phosphate and acetaldehyde from 2-deoxy-alpha-D-ribose 1-phosphate: step 1/2. Functionally, isomerase that catalyzes the conversion of deoxy-ribose 1-phosphate (dRib-1-P) and ribose 1-phosphate (Rib-1-P) to deoxy-ribose 5-phosphate (dRib-5-P) and ribose 5-phosphate (Rib-5-P), respectively. The sequence is that of Phosphopentomutase from Helicobacter acinonychis (strain Sheeba).